Consider the following 284-residue polypeptide: Probable endonuclease 4 (284 aa).

9 residues coordinate Zn(2+): His-69, His-113, Glu-148, Asp-182, His-185, His-217, Asp-230, His-232, and Glu-262.

This sequence belongs to the AP endonuclease 2 family. Requires Zn(2+) as cofactor.

The catalysed reaction is Endonucleolytic cleavage to 5'-phosphooligonucleotide end-products.. Its function is as follows. Endonuclease IV plays a role in DNA repair. It cleaves phosphodiester bonds at apurinic or apyrimidinic (AP) sites, generating a 3'-hydroxyl group and a 5'-terminal sugar phosphate. The sequence is that of Probable endonuclease 4 from Bifidobacterium longum subsp. infantis (strain ATCC 15697 / DSM 20088 / JCM 1222 / NCTC 11817 / S12).